We begin with the raw amino-acid sequence, 312 residues long: Ribosomal RNA small subunit methyltransferase H (312 aa).

Residues 32-34, D51, F78, D99, and Q106 each bind S-adenosyl-L-methionine; that span reads AGH.

Belongs to the methyltransferase superfamily. RsmH family.

Its subcellular location is the cytoplasm. The enzyme catalyses cytidine(1402) in 16S rRNA + S-adenosyl-L-methionine = N(4)-methylcytidine(1402) in 16S rRNA + S-adenosyl-L-homocysteine + H(+). Specifically methylates the N4 position of cytidine in position 1402 (C1402) of 16S rRNA. The polypeptide is Ribosomal RNA small subunit methyltransferase H (Exiguobacterium sibiricum (strain DSM 17290 / CCUG 55495 / CIP 109462 / JCM 13490 / 255-15)).